The following is a 319-amino-acid chain: 7-methylguanosine phosphate-specific 5'-nucleotidase (319 aa).

The active-site Nucleophile is the aspartate 55. Mg(2+) contacts are provided by aspartate 55 and aspartate 57. The active-site Proton donor is the aspartate 57. Glutamate 103 is a CMP binding site. The N(7)-methyl-GMP site is built by glutamate 103 and serine 124. Position 171-172 (171-172) interacts with substrate; that stretch reads SA. Aspartate 245 lines the Mg(2+) pocket.

The protein belongs to the pyrimidine 5'-nucleotidase family. In terms of assembly, monomer. It depends on Mg(2+) as a cofactor.

It carries out the reaction N(7)-methyl-GMP + H2O = N(7)-methylguanosine + phosphate. The enzyme catalyses CMP + H2O = cytidine + phosphate. The catalysed reaction is a ribonucleoside 5'-phosphate + H2O = a ribonucleoside + phosphate. Its activity is regulated as follows. Inhibited by high levels of AMP. Specifically hydrolyzes 7-methylguanosine monophosphate (m(7)GMP) to 7-methylguanosine and inorganic phosphate. Also able to mediate hydrolysis of diphosphate (m(7)GDP) to 7-methylguanosine and 2 inorganic phosphate with lower activity. The specific activity for m(7)GMP may protect cells against undesired salvage of m(7)GMP and its incorporation into nucleic acids. Also has weak activity for CMP. UMP and purine nucleotides are poor substrates. The polypeptide is 7-methylguanosine phosphate-specific 5'-nucleotidase (Drosophila melanogaster (Fruit fly)).